The chain runs to 507 residues: MFS transporter fsa7 (507 aa).

The segment at 1–65 (MATKDPAVTT…PDDPEHPLNW (65 aa)) is disordered. Asparagine 64 is a glycosylation site (N-linked (GlcNAc...) asparagine). Residues 72 to 92 (LHLVIVSLFTLAANLAATMFA) traverse the membrane as a helical segment. N-linked (GlcNAc...) asparagine glycosylation is present at asparagine 106. 5 helical membrane passes run 111-131 (AMTV…LAPL), 146-166 (FVYI…MFLV), 169-189 (IICG…VADL), 200-220 (ALFT…GGFV), and 228-248 (WTFR…VIFM). An N-linked (GlcNAc...) asparagine glycan is attached at asparagine 252. The next 6 helical transmembrane spans lie at 302–322 (PIVL…FLLF), 341–361 (GLAY…FSVL), 379–399 (LILM…YGWT), 406–426 (WIVP…VVIP), 429–449 (IYLV…ANLL), and 472–492 (GWGN…PWFF).

This sequence belongs to the major facilitator superfamily.

The protein localises to the cell membrane. Efflux pump that might be required for efficient secretion of fusarisetin A or other secondary metabolies produced by the fusarisetin A gene cluster. The sequence is that of MFS transporter fsa7 from Fusarium sp. (strain FN080326).